A 942-amino-acid polypeptide reads, in one-letter code: Isoleucine--tRNA ligase (942 aa).

Residues 58–68 (PYVNGSIHLGH) carry the 'HIGH' region motif. Position 564 (Glu-564) interacts with L-isoleucyl-5'-AMP. A 'KMSKS' region motif is present at residues 605–609 (KMSKS). Residue Lys-608 coordinates ATP. Zn(2+)-binding residues include Cys-905, Cys-908, Cys-925, and Cys-928.

Belongs to the class-I aminoacyl-tRNA synthetase family. IleS type 1 subfamily. As to quaternary structure, monomer. Zn(2+) serves as cofactor.

Its subcellular location is the cytoplasm. The catalysed reaction is tRNA(Ile) + L-isoleucine + ATP = L-isoleucyl-tRNA(Ile) + AMP + diphosphate. Its function is as follows. Catalyzes the attachment of isoleucine to tRNA(Ile). As IleRS can inadvertently accommodate and process structurally similar amino acids such as valine, to avoid such errors it has two additional distinct tRNA(Ile)-dependent editing activities. One activity is designated as 'pretransfer' editing and involves the hydrolysis of activated Val-AMP. The other activity is designated 'posttransfer' editing and involves deacylation of mischarged Val-tRNA(Ile). The polypeptide is Isoleucine--tRNA ligase (Blochmanniella pennsylvanica (strain BPEN)).